The sequence spans 210 residues: dTTP/UTP pyrophosphatase (210 aa).

Residue Asp-89 is the Proton acceptor of the active site.

The protein belongs to the Maf family. YhdE subfamily. Requires a divalent metal cation as cofactor.

It localises to the cytoplasm. The enzyme catalyses dTTP + H2O = dTMP + diphosphate + H(+). It carries out the reaction UTP + H2O = UMP + diphosphate + H(+). Its function is as follows. Nucleoside triphosphate pyrophosphatase that hydrolyzes dTTP and UTP. May have a dual role in cell division arrest and in preventing the incorporation of modified nucleotides into cellular nucleic acids. The chain is dTTP/UTP pyrophosphatase from Burkholderia lata (strain ATCC 17760 / DSM 23089 / LMG 22485 / NCIMB 9086 / R18194 / 383).